Here is a 474-residue protein sequence, read N- to C-terminus: GTPase Der (474 aa).

EngA-type G domains are found at residues Leu2–Glu166 and Leu212–Ser385. GTP-binding positions include Gly8–Ser15, Asp55–Val59, Asn118–Asp121, Gly218–Ser225, Asp265–Leu269, and Asn330–Asp333. The region spanning Ser386–Thr470 is the KH-like domain.

Belongs to the TRAFAC class TrmE-Era-EngA-EngB-Septin-like GTPase superfamily. EngA (Der) GTPase family. As to quaternary structure, associates with the 50S ribosomal subunit.

Functionally, GTPase that plays an essential role in the late steps of ribosome biogenesis. The protein is GTPase Der of Chlamydia caviae (strain ATCC VR-813 / DSM 19441 / 03DC25 / GPIC) (Chlamydophila caviae).